Reading from the N-terminus, the 474-residue chain is Na(+)/H(+) antiporter NhaA 3 (474 aa).

The next 11 membrane-spanning stretches (helical) occupy residues 31–51, 73–93, 110–130, 141–161, 171–191, 194–214, 220–240, 280–300, 309–329, 347–367, and 378–398; these read VGGV…NIPA, LSVA…VAGI, AALP…VYTV, GWAV…AVIG, FLLT…AVFF, TLNF…WLLL, GWYV…NSGV, LAVP…GALA, LGVV…GTWL, VFAV…IGEL, and EVKA…TVLL.

It belongs to the NhaA Na(+)/H(+) (TC 2.A.33) antiporter family.

The protein localises to the cell membrane. It catalyses the reaction Na(+)(in) + 2 H(+)(out) = Na(+)(out) + 2 H(+)(in). Its function is as follows. Na(+)/H(+) antiporter that extrudes sodium in exchange for external protons. The sequence is that of Na(+)/H(+) antiporter NhaA 3 from Streptomyces coelicolor (strain ATCC BAA-471 / A3(2) / M145).